Here is a 298-residue protein sequence, read N- to C-terminus: Porphobilinogen deaminase (298 aa).

Cys239 is subject to S-(dipyrrolylmethanemethyl)cysteine.

The protein belongs to the HMBS family. In terms of assembly, monomer. It depends on dipyrromethane as a cofactor.

The enzyme catalyses 4 porphobilinogen + H2O = hydroxymethylbilane + 4 NH4(+). The protein operates within porphyrin-containing compound metabolism; protoporphyrin-IX biosynthesis; coproporphyrinogen-III from 5-aminolevulinate: step 2/4. Tetrapolymerization of the monopyrrole PBG into the hydroxymethylbilane pre-uroporphyrinogen in several discrete steps. The protein is Porphobilinogen deaminase of Orientia tsutsugamushi (strain Boryong) (Rickettsia tsutsugamushi).